The following is a 105-amino-acid chain: Large ribosomal subunit protein uL24 (105 aa).

It belongs to the universal ribosomal protein uL24 family. Part of the 50S ribosomal subunit.

Functionally, one of two assembly initiator proteins, it binds directly to the 5'-end of the 23S rRNA, where it nucleates assembly of the 50S subunit. In terms of biological role, one of the proteins that surrounds the polypeptide exit tunnel on the outside of the subunit. In Aromatoleum aromaticum (strain DSM 19018 / LMG 30748 / EbN1) (Azoarcus sp. (strain EbN1)), this protein is Large ribosomal subunit protein uL24.